A 687-amino-acid polypeptide reads, in one-letter code: Adhesion G-protein coupled receptor G1 (687 aa).

Residues 1–25 (MTAQSLLQTTLFLLSLLFLVQGAHG) form the signal peptide. 26–33 (RGHREDFR) lines the heparin pocket. Over 26–402 (RGHREDFRFC…VEVDAVHKHY (377 aa)) the chain is Extracellular. Intrachain disulfides connect Cys-35–Cys-91 and Cys-121–Cys-177. Residues Asn-39, Asn-148, Asn-156, and Asn-171 are each glycosylated (N-linked (GlcNAc...) asparagine). Residue 190-200 (LKHPQKASRRP) coordinates heparin. In terms of domain architecture, GAIN-B spans 224-395 (DTVSFEEDRV…AVLMVSSVEV (172 aa)). Residues Asn-234, Asn-303, Asn-324, and Asn-341 are each glycosylated (N-linked (GlcNAc...) asparagine). Cystine bridges form between Cys-346–Cys-377 and Cys-366–Cys-379. The GPS stretch occupies residues 346–395 (CVFWVEDPTLSNPGRWSSAGCETVRRETQTSCFCNHLTYFAVLMVSSVEV). Residues 384-397 (YFAVLMVSSVEVDA) form a stachel region. Residues 403–423 (LSLLSYVGCVVSALACVVTIA) form a helical membrane-spanning segment. The Cytoplasmic portion of the chain corresponds to 424–442 (AYLCSRRKPRDYTIKVHMN). Residues 443-463 (LLLAVFLLDVSFLLSEPVALT) form a helical membrane-spanning segment. Residues 464–470 (GSQSGCR) lie on the Extracellular side of the membrane. The chain crosses the membrane as a helical span at residues 471-491 (ASAIFLHFSLLACLSWMGLEG). Residues 492 to 512 (YNLYRLVVEVFGTYIPGYLLK) are Cytoplasmic-facing. A helical transmembrane segment spans residues 513-533 (LSAMGWGFPIFLVTLVALVDV). The Extracellular portion of the chain corresponds to 534–570 (DNYGPIILAVHRTPESVIYPSMCWIRDSLVSYITNLG). A helical transmembrane segment spans residues 571–591 (LFSLVFLFNMAMLGTMVVQIL). The Cytoplasmic segment spans residues 592-603 (RLRPHTQKWSHV). The helical transmembrane segment at 604–624 (LTLLGLSLVLGLPWALIFFSF) threads the bilayer. Residues 625 to 630 (ASGTFQ) lie on the Extracellular side of the membrane. The chain crosses the membrane as a helical span at residues 631-651 (LVVLYLFSIITSFQGFLIFLW). Residues 652–687 (YWSMRLQARGGPSPLKSNSDSARLPISTGSTSSSRI) lie on the Cytoplasmic side of the membrane. Positions 664–687 (SPLKSNSDSARLPISTGSTSSSRI) are disordered. The segment covering 666–687 (LKSNSDSARLPISTGSTSSSRI) has biased composition (polar residues).

Belongs to the G-protein coupled receptor 2 family. LN-TM7 subfamily. As to quaternary structure, heterodimer of 2 chains generated by proteolytic processing; the large extracellular N-terminal fragment (ADGRG1 NT) and the membrane-bound C-terminal fragment (ADGRG1-CT) predominantly remain associated and non-covalently linked. ADGRG1 NT self-associates in a trans-trans manner; the homophilic interaction enhances receptor signaling. Interacts with TGM2. Interacts with heparin; leading to the reduction of ADGRG1 shedding. Interacts with COL3A1. Part of a GPCR-tetraspanin complex at least consisting of ADGRG1, CD81, eventually CD9, and GNA11 in which CD81 is enhancing the association of ADGRG1 with GNA11. Autoproteolytically cleaved into 2 fragments; the large extracellular N-terminal fragment (ADGRG1 NT) and the membrane-bound C-terminal fragment (ADGRG1 CT) predominantly remain associated and non-covalently linked. Shedding to yield the secreted ADGRG1 N-terminal fragment seems to involve metalloprotease(s). Post-translationally, ubiquitinated. Undergoes polyubiquitination upon activation.

The protein localises to the cell membrane. It is found in the secreted. Its subcellular location is the membrane raft. Forms a heterodimer of 2 chains generated by proteolytic processing that remain associated through non-covalent interactions mediated by the GAIN-B domain. In the inactivated receptor, the Stachel sequence (also named stalk) is embedded in the GAIN-B domain, where it adopts a beta-strand conformation. On activation, the Stachel moves into the 7 transmembrane region and adopts a twisted hook-shaped configuration that forms contacts within the receptor, leading to coupling of a G-alpha protein, which activates signaling. The cleaved GAIN-B and N-terminal domains can then dissociate from the rest of the receptor. In terms of biological role, adhesion G-protein coupled receptor (aGPCR) for steroid hormone 17alpha-hydroxypregnenolone (17-OH), which is involved in cell adhesion and cell-cell interactions. Ligand binding causes a conformation change that triggers signaling via guanine nucleotide-binding proteins (G proteins) and modulates the activity of downstream effectors, such as RhoA pathway. ADGRG1 is coupled to G(12) and/or G(13) G proteins (GNA12 and GNA13, respectively) and mediates the activation Rho small GTPases. Acts as a potent suppressor of ferroptosis: binding to 17-OH-binding initiates signaling that down-regulates CD36 and alleviates ferroptosis-induced liver injury. Ligand-binding also induces cell adhesion activity via association with proteins such as collagen III/COL3A1 and TGM2. Mediates cell matrix adhesion in developing neurons and hematopoietic stem cells. Involved in cortical development, specifically in maintenance of the pial basement membrane integrity and in cortical lamination: association with COL3A1 in the developing brain inhibits neuronal migration via activation of the RhoA pathway. Together with TGM2, acts as a regulator of myelination and myelin repair in oligodendrocyte precursor cells. Acts as a hemostatic sensor of shear force: G protein-coupled receptor signaling is activated in response to shear force in platelets, promoting G(13) G protein signaling, and platelet shape change and aggregation in a COL3A1-dependent manner. Acts as an inhibitor of VEGFA production thereby inhibiting angiogenesis through a signaling pathway mediated by PRKCA. Plays a role in the maintenance of hematopoietic stem cells in bone marrow niche. Plays an essential role in testis development. In Macaca mulatta (Rhesus macaque), this protein is Adhesion G-protein coupled receptor G1 (ADGRG1).